A 38-amino-acid chain; its full sequence is Photosystem II reaction center protein L (38 aa).

Residues 17–37 (SLYWGLLLIFVLAVLFSNYFF) form a helical membrane-spanning segment.

Belongs to the PsbL family. PSII is composed of 1 copy each of membrane proteins PsbA, PsbB, PsbC, PsbD, PsbE, PsbF, PsbH, PsbI, PsbJ, PsbK, PsbL, PsbM, PsbT, PsbX, PsbY, PsbZ, Psb30/Ycf12, at least 3 peripheral proteins of the oxygen-evolving complex and a large number of cofactors. It forms dimeric complexes.

It localises to the plastid. It is found in the chloroplast thylakoid membrane. Functionally, one of the components of the core complex of photosystem II (PSII). PSII is a light-driven water:plastoquinone oxidoreductase that uses light energy to abstract electrons from H(2)O, generating O(2) and a proton gradient subsequently used for ATP formation. It consists of a core antenna complex that captures photons, and an electron transfer chain that converts photonic excitation into a charge separation. This subunit is found at the monomer-monomer interface and is required for correct PSII assembly and/or dimerization. The chain is Photosystem II reaction center protein L from Adiantum capillus-veneris (Maidenhair fern).